The primary structure comprises 150 residues: Group IIC secretory phospholipase A2 (150 aa).

The N-terminal stretch at 1-20 is a signal peptide; the sequence is MKGIAIFLVFIFYWTTSTLS. Cystine bridges form between C46–C143, C48–C64, C63–C121, C69–C150, C70–C114, C79–C107, C97–C112, and C99–C105. Residues Y47, G49, and G51 each contribute to the Ca(2+) site. H67 is a catalytic residue. Ca(2+) is bound at residue D68. N92 is a glycosylation site (N-linked (GlcNAc...) asparagine). D115 is a catalytic residue.

It belongs to the phospholipase A2 family. Ca(2+) serves as cofactor. In terms of tissue distribution, testis specific.

It localises to the secreted. It catalyses the reaction a 1,2-diacyl-sn-glycero-3-phosphocholine + H2O = a 1-acyl-sn-glycero-3-phosphocholine + a fatty acid + H(+). Its function is as follows. PA2 catalyzes the calcium-dependent hydrolysis of the 2-acyl groups in 3-sn-phosphoglycerides. Testis PA2 may be important in the production of prostaglandins, by the release of arachidonic acid, which in turn are necessary for the contractions of the seminiferous tubules and the testicular capsule; they also seem to decrease sperm transit time through the male reproductive tract. The chain is Group IIC secretory phospholipase A2 (Pla2g2c) from Mus musculus (Mouse).